Consider the following 156-residue polypeptide: Small ribosomal subunit protein uS7 (156 aa).

Belongs to the universal ribosomal protein uS7 family. In terms of assembly, part of the 30S ribosomal subunit. Contacts proteins S9 and S11.

In terms of biological role, one of the primary rRNA binding proteins, it binds directly to 16S rRNA where it nucleates assembly of the head domain of the 30S subunit. Is located at the subunit interface close to the decoding center, probably blocks exit of the E-site tRNA. This Bacillus velezensis (strain DSM 23117 / BGSC 10A6 / LMG 26770 / FZB42) (Bacillus amyloliquefaciens subsp. plantarum) protein is Small ribosomal subunit protein uS7.